The primary structure comprises 151 residues: Large ribosomal subunit protein uL22c (151 aa).

The protein belongs to the universal ribosomal protein uL22 family. Part of the 50S ribosomal subunit.

The protein localises to the plastid. The protein resides in the chloroplast. Its function is as follows. This protein binds specifically to 23S rRNA. The globular domain of the protein is located near the polypeptide exit tunnel on the outside of the subunit, while an extended beta-hairpin is found that lines the wall of the exit tunnel in the center of the 70S ribosome. This is Large ribosomal subunit protein uL22c (rpl22) from Gossypium barbadense (Sea Island cotton).